Here is a 247-residue protein sequence, read N- to C-terminus: 3-deoxy-manno-octulosonate cytidylyltransferase (247 aa).

This sequence belongs to the KdsB family.

The protein localises to the cytoplasm. It catalyses the reaction 3-deoxy-alpha-D-manno-oct-2-ulosonate + CTP = CMP-3-deoxy-beta-D-manno-octulosonate + diphosphate. It functions in the pathway nucleotide-sugar biosynthesis; CMP-3-deoxy-D-manno-octulosonate biosynthesis; CMP-3-deoxy-D-manno-octulosonate from 3-deoxy-D-manno-octulosonate and CTP: step 1/1. The protein operates within bacterial outer membrane biogenesis; lipopolysaccharide biosynthesis. In terms of biological role, activates KDO (a required 8-carbon sugar) for incorporation into bacterial lipopolysaccharide in Gram-negative bacteria. This Leptospira interrogans serogroup Icterohaemorrhagiae serovar Lai (strain 56601) protein is 3-deoxy-manno-octulosonate cytidylyltransferase.